A 416-amino-acid polypeptide reads, in one-letter code: Choline/ethanolaminephosphotransferase 1 (416 aa).

The interval 1–20 is disordered; it reads MSGHRSTRKRCGDSHPESPV. Residue Ser-18 is modified to Phosphoserine. The residue at position 40 (Thr-40) is a Phosphothreonine. A CDP-choline-binding site is contributed by Asn-86. 2 helical membrane passes run 89–108 and 116–133; these read TIIGLSINICTTILLVFYCP and LWAYIACACGLFIYQSLD. Asp-133 is a binding site for Mg(2+). Asn-144 carries N-linked (GlcNAc...) asparagine glycosylation. Glu-151 serves as a coordination point for CDP-choline. Residue Asp-154 coordinates Mg(2+). The active-site Proton acceptor is the His-155. The next 8 membrane-spanning stretches (helical) occupy residues 156 to 176, 180 to 199, 210 to 230, 246 to 267, 286 to 306, 315 to 334, 349 to 363, and 368 to 388; these read GCDSLSTVFVVLGTCIAVQLG, DWMFFCCFAGTFMFYCAHWQ, IIDVTEVQIFIIIMHLLAVIG, MKIFPALCTVAGTIFSCTNYFR, VLSPFLHIGSVITLAAMIYKK, HPCLYILTFGFVSAKITNKL, TAFIGPALLFLDQYF, and DEYIVLWIALVFSFFDLIRYC. Position 158 (Asp-158) interacts with Mg(2+).

The protein belongs to the CDP-alcohol phosphatidyltransferase class-I family. As to quaternary structure, homodimer. The cofactor is Mg(2+). Mn(2+) is required as a cofactor. As to expression, ubiquitously expressed.

The protein resides in the endoplasmic reticulum membrane. It is found in the nucleus membrane. The catalysed reaction is CDP-ethanolamine + a 1,2-diacyl-sn-glycerol = a 1,2-diacyl-sn-glycero-3-phosphoethanolamine + CMP + H(+). It catalyses the reaction CDP-choline + a 1,2-diacyl-sn-glycerol = a 1,2-diacyl-sn-glycero-3-phosphocholine + CMP + H(+). It carries out the reaction 1-O-alkyl-2-acyl-sn-glycerol + CDP-choline = a 1-O-alkyl-2-acyl-sn-glycero-3-phosphocholine + CMP + H(+). The enzyme catalyses a 1-O-(1Z-alkenyl)-2-acyl-sn-glycerol + CDP-choline = a 1-O-(1Z-alkenyl)-2-acyl-sn-glycero-3-phosphocholine + CMP + H(+). The catalysed reaction is 1,2-dioctanoyl-sn-glycerol + CDP-choline = 1,2-dioctanoyl-sn-glycero-3-phosphocholine + CMP + H(+). It catalyses the reaction 1,2-didecanoyl-sn-glycerol + CDP-choline = 1,2-didecanoyl-sn-glycero-3-phosphocholine + CMP + H(+). It carries out the reaction CDP-choline + 1,2-di-(9Z-octadecenoyl)-sn-glycerol = 1,2-di-(9Z-octadecenoyl)-sn-glycero-3-phosphocholine + CMP + H(+). The enzyme catalyses 1-hexadecanoyl-2-(9Z-octadecenoyl)-sn-glycerol + CDP-choline = 1-hexadecanoyl-2-(9Z-octadecenoyl)-sn-glycero-3-phosphocholine + CMP + H(+). The catalysed reaction is CDP-ethanolamine + 1,2-di-(9Z-octadecenoyl)-sn-glycerol = 1,2-di-(9Z-octadecenoyl)-sn-glycero-3-phosphoethanolamine + CMP + H(+). It catalyses the reaction 1-hexadecanoyl-2-(9Z-octadecenoyl)-sn-glycerol + CDP-ethanolamine = 1-hexadecanoyl-2-(9Z-octadecenoyl)-sn-glycero-3-phosphoethanolamine + CMP + H(+). It carries out the reaction 1-hexadecanoyl-2-(4Z,7Z,10Z,13Z,16Z,19Z-docosahexaenoyl)-sn-glycerol + CDP-choline = 1-hexadecanoyl-2-(4Z,7Z,10Z,13Z,16Z,19Z-docosahexaenoyl)-sn-glycero-3-phosphocholine + CMP + H(+). The enzyme catalyses 1,2-di-(9Z-hexadecenoyl)-sn-glycerol + CDP-choline = 1,2-di-(9Z-hexadecenoyl)-sn-glycero-3-phosphocholine + CMP + H(+). The catalysed reaction is 1,2-di-(9Z-hexadecenoyl)-sn-glycerol + CDP-ethanolamine = 1,2-di-(9Z-hexadecenoyl)-sn-glycero-3-phosphoethanolamine + CMP + H(+). It catalyses the reaction 1-O-hexadecyl-2-acetyl-sn-glycerol + CDP-choline = 1-O-hexadecyl-2-acetyl-sn-glycero-3-phosphocholine + CMP + H(+). It carries out the reaction 1-O-hexadecyl-2-(5Z,8Z,11Z,14Z-eicosatetraenoyl)-sn-glycerol + CDP-choline = 1-O-hexadecyl-2-(5Z,8Z,11Z,14Z)-eicosatetraenoyl-sn-glycero-3-phosphocholine + CMP + H(+). Its pathway is phospholipid metabolism; phosphatidylethanolamine biosynthesis; phosphatidylethanolamine from ethanolamine: step 3/3. The protein operates within phospholipid metabolism; phosphatidylcholine biosynthesis; phosphatidylcholine from phosphocholine: step 2/2. Catalyzes both phosphatidylcholine and phosphatidylethanolamine biosynthesis from CDP-choline and CDP-ethanolamine, respectively. Involved in protein-dependent process of phospholipid transport to distribute phosphatidyl choline to the lumenal surface. Has a higher cholinephosphotransferase activity than ethanolaminephosphotransferase activity. The sequence is that of Choline/ethanolaminephosphotransferase 1 from Homo sapiens (Human).